Here is a 499-residue protein sequence, read N- to C-terminus: Probable folate-biopterin transporter 2 (499 aa).

The next 12 helical transmembrane spans lie at 43–63, 92–112, 116–136, 141–161, 185–205, 209–229, 266–286, 302–322, 330–350, 354–374, 399–419, and 435–455; these read WSFVFGVVSLYGINQGLGGSL, IPWIIKPLWGILTDVLPIFGF, PYFILAGVLGVVSLLFISLHS, YLALFWMTISSAAMAIADVTI, LSSSIGALLGFFMSGILVHLV, GVFGLLTFPFALVSVVGIVFS, LYMYISLTLGLNIHEGLFYWF, FILSIGSIGSILAATLYQLVL, LCLWTQLLFALSGMLDLILVF, LKFGLPDYLFIVVDEIVSQMI, FALLMSIDNAGLMTSSWLGGI, and WLAVLVRNVMRLLPLCFLFLV.

The protein belongs to the major facilitator superfamily. Folate-biopterin transporter (TC 2.A.71) family.

The protein localises to the membrane. In terms of biological role, could mediate folate transport. This is Probable folate-biopterin transporter 2 from Arabidopsis thaliana (Mouse-ear cress).